Here is a 427-residue protein sequence, read N- to C-terminus: L-glutamine:2-deoxy-scyllo-inosose aminotransferase (427 aa).

Positions 1–20 (MPLQSSRLAVDNGTPVRGKP) are disordered. Lysine 205 carries the post-translational modification N6-(pyridoxal phosphate)lysine.

It belongs to the DegT/DnrJ/EryC1 family. L-glutamine:2-deoxy-scyllo-inosose/scyllo-inosose aminotransferase subfamily. The cofactor is pyridoxal 5'-phosphate.

The catalysed reaction is 2-deoxy-L-scyllo-inosose + L-glutamine = 2-deoxy-scyllo-inosamine + 2-oxoglutaramate. It catalyses the reaction 3-amino-2,3-dideoxy-scyllo-inosose + L-glutamine = 2-deoxystreptamine + 2-oxoglutaramate. Its pathway is metabolic intermediate biosynthesis; 2-deoxystreptamine biosynthesis; 2-deoxystreptamine from D-glucose 6-phosphate: step 2/4. It functions in the pathway antibiotic biosynthesis; kanamycin biosynthesis. In terms of biological role, catalyzes the PLP-dependent transamination of 2-deoxy-scyllo-inosose (2-DOI) to form 2-deoxy-scyllo-inosamine (2-DOIA) using L-glutamine as the amino donor. Also catalyzes the transamination of 3-amino-2,3-dideoxy-scyllo-inosose (keto-2-DOIA) into 2-deoxystreptamine (2-DOS). The chain is L-glutamine:2-deoxy-scyllo-inosose aminotransferase (kanB) from Streptomyces kanamyceticus.